An 85-amino-acid chain; its full sequence is Toxin 3FTx-Lei1 (85 aa).

The signal sequence occupies residues 1-21; the sequence is MKTLLLSLVVVTFVCLDLAHT. Intrachain disulfides connect Cys-24–Cys-45, Cys-27–Cys-32, Cys-38–Cys-63, Cys-67–Cys-78, and Cys-79–Cys-84.

The protein belongs to the three-finger toxin family. Ancestral subfamily. As to expression, expressed by the venom gland.

Its subcellular location is the secreted. The polypeptide is Toxin 3FTx-Lei1 (Leioheterodon madagascariensis (Malagasy giant hognose snake)).